A 478-amino-acid chain; its full sequence is Transposase for insertion sequence element IS231E (478 aa).

It belongs to the transposase 11 family.

Its function is as follows. Involved in the transposition of the insertion sequence. The sequence is that of Transposase for insertion sequence element IS231E from Bacillus thuringiensis subsp. finitimus.